A 391-amino-acid polypeptide reads, in one-letter code: Oxytocin receptor (391 aa).

Residues 1–38 are Extracellular-facing; that stretch reads MEGAFAANWSAEAVNGSAAPPGTEGNRTAGPPQRNEAL. Residues Asn8, Asn15, and Asn26 are each glycosylated (N-linked (GlcNAc...) asparagine). Residues 39 to 63 form a helical membrane-spanning segment; sequence ARVEVAVLSLILFLALSGNACVLLA. Residues 64–74 lie on the Cytoplasmic side of the membrane; the sequence is LRTTRHKHSRL. A helical transmembrane segment spans residues 75–97; it reads FFFMKHLSIADLAVAVFQVLPQL. Residues 98–113 are Extracellular-facing; the sequence is LWDITFRFYGPDLLCR. A disulfide bridge links Cys112 with Cys187. Residues 114–135 form a helical membrane-spanning segment; that stretch reads LVKYLQVVGMFASTYLLLLMSL. Residues 136–154 lie on the Cytoplasmic side of the membrane; it reads DRCLAICQPLRSLRRRTDR. A helical transmembrane segment spans residues 155–175; sequence LAVLATWLGCLVASAPQVHIF. Residues 176 to 202 are Extracellular-facing; it reads SLREVADGVFDCWAVFIQPWGPKAYIT. The helical transmembrane segment at 203–225 threads the bilayer; the sequence is WITLAVYIVPVIVLAACYGLISF. Residues 226-277 lie on the Cytoplasmic side of the membrane; the sequence is KIWQNLRLKTEAAAAEASAGAEGAAADCAGRAALARVSNVKLISKAKIRTVK. The chain crosses the membrane as a helical span at residues 278 to 296; that stretch reads MTFIVVLAFIVCWTPFFFK. Topologically, residues 297 to 311 are extracellular; sequence QMWSVWDADAPKEAS. A helical membrane pass occupies residues 312-334; the sequence is AFIIAMLLASLNSCCNPWIYMLF. Over 335 to 391 the chain is Cytoplasmic; the sequence is TGHLFQDLVQRFLCCSFRRLKGSQLGETSVTKKIHSYTFVLSRHSSSQRSCSQPSTV. Ser370 carries the post-translational modification Phosphoserine.

Belongs to the G-protein coupled receptor 1 family. Vasopressin/oxytocin receptor subfamily.

Its subcellular location is the cell membrane. In terms of biological role, receptor for oxytocin. The activity of this receptor is mediated by G proteins which activate a phosphatidylinositol-calcium second messenger system. The sequence is that of Oxytocin receptor (OXTR) from Ovis aries (Sheep).